The sequence spans 542 residues: Phenylacetone monooxygenase (542 aa).

Residues Ser-27, Glu-46, 54–57 (VWYW), Asp-66, Tyr-72, Val-119, and Gln-152 each bind FAD. 64–66 (RCD) contributes to the NADP(+) binding site. Residues 194 to 200 (TGSSGIQ), 217 to 218 (RT), and 336 to 337 (KR) each bind NADP(+). Met-446 serves as a coordination point for FAD. Residue Trp-501 coordinates NADP(+).

The protein belongs to the FAD-binding monooxygenase family. As to quaternary structure, monomer. FAD serves as cofactor.

It catalyses the reaction phenylacetone + NADPH + O2 + H(+) = benzyl acetate + NADP(+) + H2O. Catalyzes a Baeyer-Villiger oxidation reaction, i.e. the insertion of an oxygen atom into a carbon-carbon bond adjacent to a carbonyl, which converts ketones to esters. Is most efficient with phenylacetone as substrate, leading to the formation of benzyl acetate. Can also oxidize other aromatic ketones (benzylacetone, alpha-methylphenylacetone and 4-hydroxyacetophenone), some aliphatic ketones (dodecan-2-one and bicyclohept-2-en-6-one) and sulfides (e.g. methyl 4-tolylsulfide). This is Phenylacetone monooxygenase (pamO) from Thermobifida fusca (strain YX).